We begin with the raw amino-acid sequence, 258 residues long: Hydroxyacylglutathione hydrolase (258 aa).

Zn(2+) is bound by residues histidine 56, histidine 58, aspartate 60, histidine 61, histidine 112, aspartate 132, and histidine 170.

The protein belongs to the metallo-beta-lactamase superfamily. Glyoxalase II family. Monomer. The cofactor is Zn(2+).

It catalyses the reaction an S-(2-hydroxyacyl)glutathione + H2O = a 2-hydroxy carboxylate + glutathione + H(+). It functions in the pathway secondary metabolite metabolism; methylglyoxal degradation; (R)-lactate from methylglyoxal: step 2/2. Thiolesterase that catalyzes the hydrolysis of S-D-lactoyl-glutathione to form glutathione and D-lactic acid. This chain is Hydroxyacylglutathione hydrolase, found in Pseudomonas paraeruginosa (strain DSM 24068 / PA7) (Pseudomonas aeruginosa (strain PA7)).